Reading from the N-terminus, the 250-residue chain is Archaeal flagellar motor scaffold protein FlaX (250 aa).

Over 1–9 (MAIQDLLQS) the chain is Extracellular. Residues 10-30 (SLFIILIGVGIPIAAFLEILF) form a helical membrane-spanning segment. At 31-250 (RVILPKTKRV…MILEGGGVNG (220 aa)) the chain is on the cytoplasmic side. Residues 42 to 61 (TQQSPQNISQEQRFPTQQKP) are compositionally biased toward polar residues. A disordered region spans residues 42-72 (TQQSPQNISQEQRFPTQQKPANDETSKYSSD). The segment covering 62–72 (ANDETSKYSSD) has biased composition (basic and acidic residues).

In terms of assembly, the S.acidocaldarius archaellum assembly machinery and its filament consist of seven proteins (FlaB, FlaF, FlaG, FlaH, FlaI, FlaJ and FlaX). FlaX assembles into ring-shaped oligomers. Interacts directly with FlaH and the motor ATPase FlaI.

It localises to the archaeal flagellum. The protein resides in the cell membrane. With respect to regulation, the presence of the flagellar core components FlaH, FlaI and FlaJ seems to be crucial for the stability of FlaX. Its function is as follows. Component of the archaellum. FlaX, FlaH and FlaI form the core cytoplasmic motor complex of the crenarchaeal archaellum. FlaX forms a ring that may act as a membrane-bound cytoplasmic scaffold that guides the assembly of the archaellum motor complex. Is essential for archaellum assembly. The chain is Archaeal flagellar motor scaffold protein FlaX from Sulfolobus acidocaldarius (strain ATCC 33909 / DSM 639 / JCM 8929 / NBRC 15157 / NCIMB 11770).